A 142-amino-acid chain; its full sequence is Autophagy-related protein 31 (142 aa).

It localises to the cytoplasm. The protein resides in the cytoskeleton. It is found in the preautophagosomal structure. Functionally, plays a role in starvation-induced autophagy. Involved in mitophagy. Functions with ATG17 and ATG29 at the preautophagosomal structure (PAS) in order to form normal autophagosomes under starvation conditions. May be involved in microtubule function, such as chromosome segregation and karyogamy. The chain is Autophagy-related protein 31 (CIS1) from Eremothecium gossypii (strain ATCC 10895 / CBS 109.51 / FGSC 9923 / NRRL Y-1056) (Yeast).